The sequence spans 197 residues: Adenylyl-sulfate kinase (197 aa).

33–40 (GLSGSGKS) is an ATP binding site. The Phosphoserine intermediate role is filled by Ser-107.

This sequence belongs to the APS kinase family.

The catalysed reaction is adenosine 5'-phosphosulfate + ATP = 3'-phosphoadenylyl sulfate + ADP + H(+). The protein operates within sulfur metabolism; hydrogen sulfide biosynthesis; sulfite from sulfate: step 2/3. Catalyzes the synthesis of activated sulfate. The sequence is that of Adenylyl-sulfate kinase from Bacillus pumilus (strain SAFR-032).